Here is a 166-residue protein sequence, read N- to C-terminus: Transcription antitermination protein NusB (166 aa).

Positions 1–18 (MISDESDRFNPRDPKPAD) are enriched in basic and acidic residues. The segment at 1 to 28 (MISDESDRFNPRDPKPADAGKPSKSAKR) is disordered.

It belongs to the NusB family.

Functionally, involved in transcription antitermination. Required for transcription of ribosomal RNA (rRNA) genes. Binds specifically to the boxA antiterminator sequence of the ribosomal RNA (rrn) operons. This chain is Transcription antitermination protein NusB, found in Pseudomonas putida (strain W619).